Consider the following 94-residue polypeptide: DASH complex subunit dad2 (94 aa).

A coiled-coil region spans residues 18–38 (KLRDSSNDMVQQIETLAAKLE). Positions 72-94 (VRIPPSTSNTNASATEQGDVEEV) are disordered. A compositionally biased stretch (polar residues) spans 76 to 87 (PSTSNTNASATE).

The protein belongs to the DASH complex DAD2 family. Component of the DASH complex consisting of ask1, dad1, dad2, dad3, dad4, dam1, duo1, dad5, spc19 and spc34, with a stoichiometry of one copy of each subunit per complex. Multiple DASH complexes oligomerize to form a ring that encircles spindle microtubules and organizes the rod-like NDC80 complexes of the outer kinetochore. DASH complex oligomerization strengthens microtubule attachments. On cytoplasmic microtubules, DASH complexes appear to form patches instead of rings.

It is found in the nucleus. It localises to the cytoplasm. Its subcellular location is the cytoskeleton. The protein resides in the spindle. The protein localises to the chromosome. It is found in the centromere. It localises to the kinetochore. Its function is as follows. Component of the DASH complex that connects microtubules with kinetochores and couples microtubule depolymerisation to chromosome movement; it is involved in retrieving kinetochores to the spindle poles before their re-orientation on the spindle in early mitosis and allows microtubule depolymerization to pull chromosomes apart and resist detachment during anaphase. Kinetochores, consisting of a centromere-associated inner segment and a microtubule-contacting outer segment, play a crucial role in chromosome segregation by mediating the physical connection between centromeric DNA and microtubules. Kinetochores also serve as an input point for the spindle assembly checkpoint, which delays anaphase until all chromosomes have bioriented on the mitotic spindle. The DASH complex mediates bipolar kinetochore-microtubule attachments and facilitates the formation of additional interactions between outer kinetochore components and spindle microtubules. During chromosome movement along the microtubule, it is required both for the sliding of kinetochores along the lateral side of the microtubule and also for microtubule end-on pulling on the kinetochore. Modulates cytoplasmic microtubule dynamics by tracking the plus-end of shortening microtubules and slowing their depolymerization. The protein is DASH complex subunit dad2 of Schizosaccharomyces pombe (strain 972 / ATCC 24843) (Fission yeast).